A 431-amino-acid polypeptide reads, in one-letter code: ATP-dependent RNA helicase DBP8 (431 aa).

The short motif at 2–30 is the Q motif element; that stretch reads ADFKSLGLSKWLTESLRAMKITQPTAIQK. One can recognise a Helicase ATP-binding domain in the interval 33–209; the sequence is IPKILEGRDC…NAPVQKGKPP (177 aa). An ATP-binding site is contributed by 46–53; that stretch reads AKTGSGKT. Residues 155-158 carry the DEAD box motif; it reads DEAD. Residues 242-389 enclose the Helicase C-terminal domain; the sequence is YLYQLLTCEE…TNKVHDTAVI (148 aa). The tract at residues 404–431 is disordered; sequence LMAMQKENFGERKRQQKKKQNDGKSLRS. The segment covering 411-431 has biased composition (basic and acidic residues); the sequence is NFGERKRQQKKKQNDGKSLRS.

Belongs to the DEAD box helicase family. DDX49/DBP8 subfamily. As to quaternary structure, interacts with ESF2.

The protein localises to the nucleus. The protein resides in the nucleolus. The catalysed reaction is ATP + H2O = ADP + phosphate + H(+). Functionally, ATP-binding RNA helicase involved in 40S ribosomal subunit biogenesis and is required for the normal formation of 18S rRNAs through pre-rRNA processing at A0, A1 and A2 sites. Required for vegetative growth. This chain is ATP-dependent RNA helicase DBP8 (DBP8), found in Saccharomyces cerevisiae (strain YJM789) (Baker's yeast).